Here is a 156-residue protein sequence, read N- to C-terminus: SsrA-binding protein (156 aa).

The tract at residues 127–156 (GKKKYDKREDLKKKDAKRDVDRAMRDRQKY) is disordered. The segment covering 132–156 (DKREDLKKKDAKRDVDRAMRDRQKY) has biased composition (basic and acidic residues).

Belongs to the SmpB family.

It is found in the cytoplasm. In terms of biological role, required for rescue of stalled ribosomes mediated by trans-translation. Binds to transfer-messenger RNA (tmRNA), required for stable association of tmRNA with ribosomes. tmRNA and SmpB together mimic tRNA shape, replacing the anticodon stem-loop with SmpB. tmRNA is encoded by the ssrA gene; the 2 termini fold to resemble tRNA(Ala) and it encodes a 'tag peptide', a short internal open reading frame. During trans-translation Ala-aminoacylated tmRNA acts like a tRNA, entering the A-site of stalled ribosomes, displacing the stalled mRNA. The ribosome then switches to translate the ORF on the tmRNA; the nascent peptide is terminated with the 'tag peptide' encoded by the tmRNA and targeted for degradation. The ribosome is freed to recommence translation, which seems to be the essential function of trans-translation. The chain is SsrA-binding protein from Exiguobacterium sp. (strain ATCC BAA-1283 / AT1b).